Here is a 322-residue protein sequence, read N- to C-terminus: tRNA dimethylallyltransferase (322 aa).

Residue 12–19 (GPTAAGKT) participates in ATP binding. 14–19 (TAAGKT) lines the substrate pocket. 2 interaction with substrate tRNA regions span residues 37–40 (DSAL) and 160–164 (QRLIR).

This sequence belongs to the IPP transferase family. As to quaternary structure, monomer. It depends on Mg(2+) as a cofactor.

The enzyme catalyses adenosine(37) in tRNA + dimethylallyl diphosphate = N(6)-dimethylallyladenosine(37) in tRNA + diphosphate. Functionally, catalyzes the transfer of a dimethylallyl group onto the adenine at position 37 in tRNAs that read codons beginning with uridine, leading to the formation of N6-(dimethylallyl)adenosine (i(6)A). This chain is tRNA dimethylallyltransferase, found in Pseudomonas putida (Arthrobacter siderocapsulatus).